The sequence spans 1783 residues: MITSTSSTEVLTPANGSDDSKGTTTPATSSGDPEMHDDLLRNDTHDDVAIIGMACRVPGDVNSPSALWQFLLEKGDASGDMPTWRWDPYRQRHPRNAAVLAETTAKGYFLNDIDQFDAAFFAISPREAEQMDPQQRIALEVAWEALENAGISPSRLAGSNTSVYMGVNSDDYAKLVLEDLPDVGAHMGVGTAYCGIPSRISYLLDLMGPSVAMDAACASSLVAVHHARQAIRAGETDLAIAGGVNALLGPGLTRVLDEAGAISADGKCRSFDDSASGYGRGEGAGVVILKRLDKALTDGDQVLAVLKGSAVASDGKTLGIMAPNAQAQLLVAQKALKEAKVTSDSINYIEAHATSTSLGDPTETNALAEVYGVGSGRHPSDPCYIGSIKPNIGHLEAGAGVMGLIKAVLVLRYGEVPPQANLQTLNSKIAWKENLLRPARELVTLPRGALSRPLRAAIASYGYSGTVSHAIIEAFAGQSLFAERLAQIPDSDAAPALLLLSVPQANRISTTAAGLSRWLRDMDGAVSLATVASTLSQRRMHHRFRHAIVADSVANAIATLDDLAKDVPSRWAISDRIGSEAGKGAVWVFSGHGAQWPDMGRELFHSSPAFGEVVRNLEPIIQAELGFSAIETLHAGCPDRTDLIQAMTFLMHLGIAAVLEAESGPPTAVVGHSLGEAAAAVVSGALTWHEAALVVCRRARLYREFMGQGAMALVRLSASEARARIATHPGASVAIETSPTACVVSGTVDALQRLSEQWLEEGVEVRAVATDVPFHTPLLEKLAGPLRGALKNELHPQVPHRALYSTSLLDPRSDLLRDAEYWVMNMIQPVLLQSTVAALVDDGFRAFVEVASHPIITHSIVETISEQTTDRFIATPTMVRKQPALKSILAAVGRLHCFGCAVKPTDLDPTVPWSSSVPGTIWHHQSFYRAVSGMTAAQLASTHKPAANDLLGTRTALWGTEEVLYQTRLEEDNRPFPGRHPLHGSEIVPAAVLLRTFLRALSPRSVEEVSLQVPVVVSPAREIQIRHNTRNITITSRLEESTSNEHNSWLVNTTATVGADATPSVSHVDIAEVAKRLPQKLSDSFSIDYLASVGVSAMGFPWRVAHHVASDNEMLARVHANPDSLPGMDDLLTSVMDAATSIASTLWHSKPRLRMPTAVRRVVAVGVATPQVVYIHCTKAQSSVDEADVIISSEEGMVLMEIQGMAFAGVEGESLSRKSTSGLVHQISWPPAALAEEPLEFAHIAFLTADATKAQVGTYQRQIEGRGISTSIHERASDLPLTTHSSMAVVYLPQFTDRIFDTATRSCNDLVTAAQVILSSSDKPTIRLFAVTSESNLGHSALTGLGRILHTEHPEIWGSLIDLEDPSVFPLMAMRYVRNADVIKIEDGVPRTARLRPLRPAPPHSTAGPATLTFSPASTYLITGGLGSLGISVAQWMVTQGARRILLLSRRSLPPRSIWTASHKPGTQFIIDSILSLERLGATIHPVAIDISHPSAVTNLRSALTTLSLPPVAGVVHAAGILRDQLIEQITPDAFEAVLAPKIAGALALHTVFPPSSPDLDFFVLFSSCGQLLGFPGQASYASGNSFLDALARSRRKEGDNAISLLWTSWRGMGMGASSNGALEAELYARGITDVTPDEAFLAWSSISGTEGADHGVVLRARPLESGEPLPHAILRDIAPRKEKAVGEGNGENEEQRKKLSGKELAEYVLVVVKKCVSTTLSIPEDEVDETVALPEMGMDSVMTVNFRMSLQQTLTVSVGPTLVWKYPTVHHLVEYFCQVLDE.

Positions 1-31 are enriched in polar residues; it reads MITSTSSTEVLTPANGSDDSKGTTTPATSSG. The tract at residues 1–40 is disordered; sequence MITSTSSTEVLTPANGSDDSKGTTTPATSSGDPEMHDDLL. Positions 45-474 constitute a Ketosynthase family 3 (KS3) domain; the sequence is HDDVAIIGMA…GTVSHAIIEA (430 aa). Residues cysteine 217, histidine 352, and histidine 394 each act as for beta-ketoacyl synthase activity in the active site. Positions 587–884 are malonyl-CoA:ACP transacylase (MAT) domain; it reads WVFSGHGAQW…TPTMVRKQPA (298 aa). Serine 673 acts as the For acyl/malonyl transferase activity in catalysis. Residues 942-1215 are product template (PT) domain; that stretch reads THKPAANDLL…AFAGVEGESL (274 aa). Positions 948 to 1064 are N-terminal hotdog fold; that stretch reads NDLLGTRTAL…ATVGADATPS (117 aa). The PKS/mFAS DH domain maps to 948-1216; that stretch reads NDLLGTRTAL…FAGVEGESLS (269 aa). Histidine 980 acts as the Proton acceptor; for dehydratase activity in catalysis. The interval 1078-1216 is C-terminal hotdog fold; sequence PQKLSDSFSI…FAGVEGESLS (139 aa). Aspartate 1130 acts as the Proton donor; for dehydratase activity in catalysis. The Carrier domain occupies 1707 to 1781; that stretch reads EYVLVVVKKC…HLVEYFCQVL (75 aa). Serine 1741 bears the O-(pantetheine 4'-phosphoryl)serine mark.

It catalyses the reaction 3 malonyl-CoA + acetyl-CoA + NADPH + 3 H(+) = 6-methylsalicylate + 3 CO2 + NADP(+) + 4 CoA + H2O. Its pathway is secondary metabolite biosynthesis; terpenoid biosynthesis. Functionally, non-reducing polyketide synthase; part of the gene cluster that mediates the biosynthesis of macrophorins, isoprenoid epoxycyclohexenones containing cyclized drimane moieties. The first step of the pathway is the synthesis of 6-methylsalicylic acid (6-MSA) by the polyketide synthase macA. 6-MSA is then converted to m-cresol by the decarboxylase macB. The cytochrome P450 monooxygenase macC then catalyzes the oxidation of m-cresol to toluquinol. Epoxidation of toluquinol is then performed by the short chain dehydrogenase macD, with the help of macE, and a further prenylation by macG leads to 7-deacetoxyyanuthone A. The next step is the hydroxylation of C-22 of 7-deacetoxyyanuthone A by the cytochrome P450 monooxygenase macH to yield 22-deacetylyanuthone A. O-Mevalon transferase macI then attaches mevalon to the hydroxyl group of 22-deacetylyanuthone A to produce yanuthone E. The terpene cyclase macJ catalyzes the cyclization of 22-deacetylyanuthone A to macrophorin A. MacJ is also able to catalyze cyclization of yanuthone E and 7-deacetoxyyanuthone A to their corresponding macrophorins. The macJ products can be further modified by macH and macJ, as well as by the FAD-dependent monooxygenase macF, to produce additional macrophorins, including 4'-oxomacrophorin A, 4'-oxomacrophorin D and 4'-oxomacrophorin E. This Penicillium terrestre protein is 6-methylsalicylic acid synthase.